The following is a 681-amino-acid chain: UvrABC system protein B (681 aa).

The Helicase ATP-binding domain maps to 30 to 419; the sequence is QGVRDGRHWQ…GEVVELLVRP (390 aa). 43–50 is a binding site for ATP; sequence GVTGSGKT. Residues 96–119 carry the Beta-hairpin motif; sequence YYDFYQPEAYLPSLDKYIAKDLRI. One can recognise a Helicase C-terminal domain in the interval 435 to 601; the sequence is QIDNLLAEIR…SIVKSVDQIL (167 aa). A UVR domain is found at 641-676; the sequence is YAIVEGLRLEMQEAAEHMEYEKAAYLRDEITKMEQV.

It belongs to the UvrB family. In terms of assembly, forms a heterotetramer with UvrA during the search for lesions. Interacts with UvrC in an incision complex.

It is found in the cytoplasm. Its function is as follows. The UvrABC repair system catalyzes the recognition and processing of DNA lesions. A damage recognition complex composed of 2 UvrA and 2 UvrB subunits scans DNA for abnormalities. Upon binding of the UvrA(2)B(2) complex to a putative damaged site, the DNA wraps around one UvrB monomer. DNA wrap is dependent on ATP binding by UvrB and probably causes local melting of the DNA helix, facilitating insertion of UvrB beta-hairpin between the DNA strands. Then UvrB probes one DNA strand for the presence of a lesion. If a lesion is found the UvrA subunits dissociate and the UvrB-DNA preincision complex is formed. This complex is subsequently bound by UvrC and the second UvrB is released. If no lesion is found, the DNA wraps around the other UvrB subunit that will check the other stand for damage. This chain is UvrABC system protein B, found in Chlorobium chlorochromatii (strain CaD3).